We begin with the raw amino-acid sequence, 247 residues long: 7-cyano-7-deazaguanine synthase (247 aa).

21–31 (FSGGQDSTACL) serves as a coordination point for ATP. Residues Cys-209, Cys-224, Cys-227, and Cys-230 each contribute to the Zn(2+) site.

Belongs to the QueC family. Zn(2+) is required as a cofactor.

The catalysed reaction is 7-carboxy-7-deazaguanine + NH4(+) + ATP = 7-cyano-7-deazaguanine + ADP + phosphate + H2O + H(+). The protein operates within purine metabolism; 7-cyano-7-deazaguanine biosynthesis. Functionally, catalyzes the ATP-dependent conversion of 7-carboxy-7-deazaguanine (CDG) to 7-cyano-7-deazaguanine (preQ(0)). This chain is 7-cyano-7-deazaguanine synthase, found in Halorhodospira halophila (strain DSM 244 / SL1) (Ectothiorhodospira halophila (strain DSM 244 / SL1)).